A 162-amino-acid polypeptide reads, in one-letter code: 2-C-methyl-D-erythritol 2,4-cyclodiphosphate synthase (162 aa).

2 residues coordinate a divalent metal cation: Asp8 and His10. Residues Asp8–His10 and His34–Ser35 each bind 4-CDP-2-C-methyl-D-erythritol 2-phosphate. His42 contacts a divalent metal cation. 4-CDP-2-C-methyl-D-erythritol 2-phosphate contacts are provided by residues Asp56–Gly58, Phe61–Asp65, Thr132–Glu135, Phe139, and Lys142.

The protein belongs to the IspF family. In terms of assembly, homotrimer. It depends on a divalent metal cation as a cofactor.

It carries out the reaction 4-CDP-2-C-methyl-D-erythritol 2-phosphate = 2-C-methyl-D-erythritol 2,4-cyclic diphosphate + CMP. The protein operates within isoprenoid biosynthesis; isopentenyl diphosphate biosynthesis via DXP pathway; isopentenyl diphosphate from 1-deoxy-D-xylulose 5-phosphate: step 4/6. In terms of biological role, involved in the biosynthesis of isopentenyl diphosphate (IPP) and dimethylallyl diphosphate (DMAPP), two major building blocks of isoprenoid compounds. Catalyzes the conversion of 4-diphosphocytidyl-2-C-methyl-D-erythritol 2-phosphate (CDP-ME2P) to 2-C-methyl-D-erythritol 2,4-cyclodiphosphate (ME-CPP) with a corresponding release of cytidine 5-monophosphate (CMP). This Pelotomaculum thermopropionicum (strain DSM 13744 / JCM 10971 / SI) protein is 2-C-methyl-D-erythritol 2,4-cyclodiphosphate synthase.